The primary structure comprises 237 residues: Ribonuclease PH (237 aa).

Phosphate-binding positions include arginine 86 and 124 to 126 (GTR).

It belongs to the RNase PH family. Homohexameric ring arranged as a trimer of dimers.

The catalysed reaction is tRNA(n+1) + phosphate = tRNA(n) + a ribonucleoside 5'-diphosphate. Functionally, phosphorolytic 3'-5' exoribonuclease that plays an important role in tRNA 3'-end maturation. Removes nucleotide residues following the 3'-CCA terminus of tRNAs; can also add nucleotides to the ends of RNA molecules by using nucleoside diphosphates as substrates, but this may not be physiologically important. Probably plays a role in initiation of 16S rRNA degradation (leading to ribosome degradation) during starvation. In Shewanella piezotolerans (strain WP3 / JCM 13877), this protein is Ribonuclease PH.